The sequence spans 1172 residues: DNA-directed RNA polymerase subunit beta (1172 aa).

Belongs to the RNA polymerase beta chain family. The RNAP catalytic core consists of 2 alpha, 1 beta, 1 beta' and 1 omega subunit. When a sigma factor is associated with the core the holoenzyme is formed, which can initiate transcription.

The catalysed reaction is RNA(n) + a ribonucleoside 5'-triphosphate = RNA(n+1) + diphosphate. Its function is as follows. DNA-dependent RNA polymerase catalyzes the transcription of DNA into RNA using the four ribonucleoside triphosphates as substrates. This is DNA-directed RNA polymerase subunit beta from Thermosipho melanesiensis (strain DSM 12029 / CIP 104789 / BI429).